Here is a 198-residue protein sequence, read N- to C-terminus: Patulin synthesis protein F (198 aa).

A signal peptide spans 1–18; the sequence is MRLSTVLLGSLLGALTQA. N128 and N184 each carry an N-linked (GlcNAc...) asparagine glycan.

It belongs to the patF family.

The protein resides in the cytoplasm. It localises to the cytosol. It catalyses the reaction phyllostine = neopatulin. Its pathway is mycotoxin biosynthesis; patulin biosynthesis. Its function is as follows. Part of the gene cluster that mediates the biosynthesis of patulin, an acetate-derived tetraketide mycotoxin produced by several fungal species that shows antimicrobial properties against several bacteria. PatF catalyzes the conversion of phyllostine into neopatulin. The pathway begins with the synthesis of 6-methylsalicylic acid by the polyketide synthase (PKS) patK via condensation of acetate and malonate units. The 6-methylsalicylic acid decarboxylase patG then catalyzes the decarboxylation of 6-methylsalicylic acid to yield m-cresol (also known as 3-methylphenol). These first reactions occur in the cytosol. The intermediate m-cresol is then transported into the endoplasmic reticulum where the cytochrome P450 monooxygenase patH converts it to m-hydroxybenzyl alcohol, which is further converted to gentisyl alcohol by the cytochrome P450 monooxygenase patI. The oxidoreductases patJ and patO further convert gentisyl alcohol to isoepoxydon in the vacuole. PatN catalyzes then the transformation of isoepoxydon into phyllostine. The cluster protein patF is responsible for the conversion from phyllostine to neopatulin whereas the alcohol dehydrogenase patD converts neopatulin to E-ascladiol. The steps between isoepoxydon and E-ascladiol occur in the cytosol, and E-ascladiol is probably secreted to the extracellular space by one of the cluster-specific transporters patC or patM. Finally, the secreted patulin synthase patE catalyzes the conversion of E-ascladiol to patulin. The sequence is that of Patulin synthesis protein F from Aspergillus clavatus (strain ATCC 1007 / CBS 513.65 / DSM 816 / NCTC 3887 / NRRL 1 / QM 1276 / 107).